The chain runs to 389 residues: D-alanine--D-alanine ligase (389 aa).

Polar residues predominate over residues methionine 1–glutamine 12. Residues methionine 1–arginine 22 form a disordered region. The ATP-grasp domain maps to lysine 169–glutamine 379. Residue alanine 205 to glutamate 260 coordinates ATP. Mg(2+)-binding residues include aspartate 333, glutamate 346, and asparagine 348.

It belongs to the D-alanine--D-alanine ligase family. Requires Mg(2+) as cofactor. Mn(2+) is required as a cofactor.

The protein localises to the cytoplasm. It carries out the reaction 2 D-alanine + ATP = D-alanyl-D-alanine + ADP + phosphate + H(+). It functions in the pathway cell wall biogenesis; peptidoglycan biosynthesis. Functionally, cell wall formation. The protein is D-alanine--D-alanine ligase (ddl) of Streptomyces coelicolor (strain ATCC BAA-471 / A3(2) / M145).